A 263-amino-acid chain; its full sequence is HLA class II histocompatibility antigen, DM beta chain (263 aa).

A signal peptide spans 1–18; sequence MITFLPLLLGLSLGCTGA. The interval 19-112 is beta-1; it reads GGFVAHVEST…PFWGSLTNRT (94 aa). The Lumenal segment spans residues 19 to 218; the sequence is GGFVAHVEST…PGLSPMQTLK (200 aa). Intrachain disulfides connect C29/C97 and C43/C53. N110 carries an N-linked (GlcNAc...) asparagine glycan. The tract at residues 113-207 is beta-2; the sequence is RPPSVQVAKT…GAPEPILRDW (95 aa). The region spanning 114 to 208 is the Ig-like C1-type domain; sequence PPSVQVAKTT…APEPILRDWT (95 aa). C135 and C192 are joined by a disulfide. Positions 208–218 are connecting peptide; it reads TPGLSPMQTLK. Residues 219-239 traverse the membrane as a helical segment; that stretch reads VSVSAVTLGLGLIIFSLGVIS. Topologically, residues 240-263 are cytoplasmic; sequence WRRAGHSSYTPLPGSNYSEGWHIS. The YXXZ motif motif lies at 248 to 251; that stretch reads YTPL.

It belongs to the MHC class II family. As to quaternary structure, heterodimer of an alpha chain (DMA) and a beta chain (DMB). Interacts with MHCII; this interaction mediates rapid selection of high-affinity peptides in a pH-dependent manner, with an optimum at pH 5.5.

The protein localises to the late endosome membrane. It localises to the lysosome membrane. Plays a critical role in catalyzing the release of class II-associated invariant chain peptide (CLIP) from newly synthesized MHC class II molecules and freeing the peptide binding site for acquisition of antigenic peptides. In B-cells, the interaction between HLA-DM and MHC class II molecules is regulated by HLA-DO. This Homo sapiens (Human) protein is HLA class II histocompatibility antigen, DM beta chain (HLA-DMB).